The following is a 269-amino-acid chain: Troponin I (269 aa).

The interval 1-104 is disordered; it reads MADDEKKAAA…AKKGFMTPER (104 aa). Ala2 bears the N-acetylalanine mark. The span at 9–50 shows a compositional bias: low complexity; the sequence is AAPAAAPAAAAKPAAPAAAPAANGKAAPAANGKAAPAAAAAP. Residues 56 to 91 show a composition bias toward basic and acidic residues; it reads DPNDPKVKAEEAKKAKQAEIERKRAEVRKRMEEASK. Residues 162 to 171 are troponin T-interaction; it reads ERMYICEGQK. Positions 189–202 are actin-binding; that stretch reads NAQVNDLRGKFVKP. Residues Lys201 and Lys205 each carry the N6,N6,N6-trimethyllysine modification. Positions 239–269 are disordered; sequence TLEEEEKEKKPDWSKGKPGDAKVKEEVEAEA.

It belongs to the troponin I family. Binds to actin and tropomyosin. As to expression, all isoforms are expressed in somatic muscle. Isoforms containing exon 6a1 (isoforms 1 and 2) are expressed in all muscles but highest expression is in abdominal muscle and splanchnic muscle of the gut. Isoforms containing exon 6b1 (isoforms 5, 6, 9 and 10) are highly expressed in the tergal depressor of trochanter (TDT) muscle.

In terms of biological role, troponin I is the ATPase inhibitory subunit of troponin in the thin filament regulatory complex. Involved in the development and maintenance of muscle and nervous system. May also be involved in the cytoskeletal apparatus. The sequence is that of Troponin I (wupA) from Drosophila melanogaster (Fruit fly).